Here is a 237-residue protein sequence, read N- to C-terminus: Phosphoadenosine 5'-phosphosulfate reductase (237 aa).

Residue C231 is the Nucleophile; cysteine thiosulfonate intermediate of the active site.

It belongs to the PAPS reductase family. CysH subfamily.

The protein resides in the cytoplasm. The enzyme catalyses [thioredoxin]-disulfide + sulfite + adenosine 3',5'-bisphosphate + 2 H(+) = [thioredoxin]-dithiol + 3'-phosphoadenylyl sulfate. The protein operates within sulfur metabolism; hydrogen sulfide biosynthesis; sulfite from sulfate: step 3/3. Its function is as follows. Catalyzes the formation of sulfite from phosphoadenosine 5'-phosphosulfate (PAPS) using thioredoxin as an electron donor. The sequence is that of Phosphoadenosine 5'-phosphosulfate reductase from Xylella fastidiosa (strain M12).